We begin with the raw amino-acid sequence, 535 residues long: CTP synthase (535 aa).

Positions 1 to 267 (MTKYIFVTGG…DKLVCEHMKL (267 aa)) are amidoligase domain. S13 lines the CTP pocket. Residue S13 participates in UTP binding. 14-19 (SLGKGI) lines the ATP pocket. Y54 is a binding site for L-glutamine. Residue D71 coordinates ATP. Mg(2+) contacts are provided by D71 and E141. CTP contacts are provided by residues 148-150 (DIE), 188-193 (KTKPTQ), and K224. UTP-binding positions include 188-193 (KTKPTQ) and K224. In terms of domain architecture, Glutamine amidotransferase type-1 spans 292 to 534 (TIGLVGKYVE…VGASLQASES (243 aa)). G354 provides a ligand contact to L-glutamine. Residue C381 is the Nucleophile; for glutamine hydrolysis of the active site. L-glutamine-binding positions include 382–385 (LGMQ), E405, and R462. Residues H507 and E509 contribute to the active site.

This sequence belongs to the CTP synthase family. In terms of assembly, homotetramer.

The enzyme catalyses UTP + L-glutamine + ATP + H2O = CTP + L-glutamate + ADP + phosphate + 2 H(+). It carries out the reaction L-glutamine + H2O = L-glutamate + NH4(+). It catalyses the reaction UTP + NH4(+) + ATP = CTP + ADP + phosphate + 2 H(+). The protein operates within pyrimidine metabolism; CTP biosynthesis via de novo pathway; CTP from UDP: step 2/2. With respect to regulation, allosterically activated by GTP, when glutamine is the substrate; GTP has no effect on the reaction when ammonia is the substrate. The allosteric effector GTP functions by stabilizing the protein conformation that binds the tetrahedral intermediate(s) formed during glutamine hydrolysis. Inhibited by the product CTP, via allosteric rather than competitive inhibition. In terms of biological role, catalyzes the ATP-dependent amination of UTP to CTP with either L-glutamine or ammonia as the source of nitrogen. Regulates intracellular CTP levels through interactions with the four ribonucleotide triphosphates. In Bacillus pumilus (strain SAFR-032), this protein is CTP synthase.